A 255-amino-acid chain; its full sequence is Ribonuclease PH (255 aa).

Phosphate is bound by residues Arg-86 and 124–126 (GTR).

The protein belongs to the RNase PH family. As to quaternary structure, homohexameric ring arranged as a trimer of dimers.

It catalyses the reaction tRNA(n+1) + phosphate = tRNA(n) + a ribonucleoside 5'-diphosphate. In terms of biological role, phosphorolytic 3'-5' exoribonuclease that plays an important role in tRNA 3'-end maturation. Removes nucleotide residues following the 3'-CCA terminus of tRNAs; can also add nucleotides to the ends of RNA molecules by using nucleoside diphosphates as substrates, but this may not be physiologically important. Probably plays a role in initiation of 16S rRNA degradation (leading to ribosome degradation) during starvation. The sequence is that of Ribonuclease PH from Hydrogenobaculum sp. (strain Y04AAS1).